Here is a 372-residue protein sequence, read N- to C-terminus: Signal peptide peptidase-like 1 (372 aa).

The Lumenal segment spans residues 1–6 (METLWT). The helical transmembrane segment at 7 to 27 (LLYLLEPAPATLIVTAVTVTF) threads the bilayer. Over 28–54 (ASAFRALNYGKEMERNRDFSEASITLD) the chain is Cytoplasmic. Residues 55 to 77 (SSQALMIPVMSSCSLLLMFYLFS) form a helical membrane-spanning segment. The Lumenal portion of the chain corresponds to 78-81 (SVSQ). The chain crosses the membrane as a helical span at residues 82–104 (LLTAFTAIASVSSLFYWLSPYAV). Over 105 to 123 (YMKTQLGLSDPFLSRCCSK) the chain is Cytoplasmic. Residues 124 to 146 (SFTRIQGLLLVACAMTVVAWLIS) traverse the membrane as a helical segment. The Lumenal portion of the chain corresponds to 147-149 (GHW). A helical transmembrane segment spans residues 150-167 (VLNNLLGISICIAFVSHV). The Cytoplasmic portion of the chain corresponds to 168 to 171 (RLPN). Residues 172–192 (IKICAMLLVCLFVYDIFWVFF) form a helical membrane-spanning segment. D186 is an active-site residue. The Lumenal segment spans residues 193-257 (SERFFGANVM…GVVPGVSASD (65 aa)). A helical transmembrane segment spans residues 258-278 (FMMLGLGDMAIPAMLLALVLC). The active site involves D265. Topologically, residues 279-301 (FDHRKTRDVVNIFDLKSSKGHKY) are cytoplasmic. Residues 302–322 (IWYALPGYAIGLVAALAAGVL) traverse the membrane as a helical segment. Residues 323–325 (THS) lie on the Lumenal side of the membrane. The helical transmembrane segment at 326–346 (PQPALLYLVPSTLGPVIFMSW) threads the bilayer. The short motif at 328–330 (PAL) is the PAL element. Over 347–372 (RRKDLAELWEGPALSNPIEKSHEIEI) the chain is Cytoplasmic.

This sequence belongs to the peptidase A22B family. As to expression, ubiquitous.

Its subcellular location is the endosome membrane. In terms of biological role, intramembrane-cleaving aspartic protease (I-CLiP) that cleaves type II membrane signal peptides in the hydrophobic plane of the membrane. This is Signal peptide peptidase-like 1 (SPPL1) from Arabidopsis thaliana (Mouse-ear cress).